The following is a 984-amino-acid chain: E3 ubiquitin-protein ligase BRE1A (984 aa).

A disordered region spans residues 1–34; sequence MSGAGNKRAAGEPGPSAPPEKKAGVEDSGTTVET. A coiled-coil region spans residues 43-90; it reads TEELDIRTLQTKNRKLAEMLDQRQAIEDELREHIEKLERRQATDDASL. The segment at 128 to 150 is disordered; the sequence is VVPEPEPDSDSNQERKDERERGE. Residues 139-150 show a composition bias toward basic and acidic residues; sequence NQERKDERERGE. 2 coiled-coil regions span residues 236–378 and 429–907; these read ADTL…VKET and SLHK…TTKK. Positions 506-632 are disordered; sequence SDLSKIRSRS…KHEDGRKKEA (127 aa). Residues 514–526 are compositionally biased toward polar residues; the sequence is RSGSALLQSQSST. Basic and acidic residues-rich tracts occupy residues 527 to 540 and 558 to 632; these read EDTKEEPPEIKQEP and SEVK…KKEA. The RING-type zinc-finger motif lies at 931 to 970; sequence CPCCNMRKKDAVLTKCFHVFCFECVKTRYDTRQRKCPKCN.

The protein belongs to the BRE1 family. In terms of assembly, component of the RNF20/40 complex (also known as BRE1 complex).

It is found in the nucleus. It catalyses the reaction S-ubiquitinyl-[E2 ubiquitin-conjugating enzyme]-L-cysteine + [acceptor protein]-L-lysine = [E2 ubiquitin-conjugating enzyme]-L-cysteine + N(6)-ubiquitinyl-[acceptor protein]-L-lysine.. Its pathway is protein modification; protein ubiquitination. Functionally, component of the RNF20/40 E3 ubiquitin-protein ligase complex that mediates monoubiquitination of 'Lys-120' of histone H2B (H2BK120ub1). H2BK120ub1 gives a specific tag for epigenetic transcriptional activation and is also prerequisite for histone H3 'Lys-4' and 'Lys-79' methylation (H3K4me and H3K79me, respectively). The chain is E3 ubiquitin-protein ligase BRE1A (RNF20) from Gallus gallus (Chicken).